Reading from the N-terminus, the 496-residue chain is NADP-dependent glyceraldehyde-3-phosphate dehydrogenase (496 aa).

Residues arginine 116 and 169-170 (NY) contribute to the substrate site. Lysine 192, threonine 195, and aspartate 230 together coordinate NADP(+). 245 to 249 (GGDTG) contacts NAD(+). The Proton acceptor role is filled by glutamate 264. 297-299 (RCT) contacts substrate. Residue cysteine 298 is the Nucleophile of the active site. Residue glutamate 391 participates in NADP(+) binding. Phosphoserine is present on serine 404. Residue arginine 451 participates in substrate binding.

The protein belongs to the aldehyde dehydrogenase family. As to quaternary structure, interacts with 14-3-3 protein when phosphorylated. This interaction is released by divalent cations. In terms of processing, phosphorylated in shoots and non-photosynthetic tissues, but not in leaves.

It localises to the cytoplasm. It catalyses the reaction D-glyceraldehyde 3-phosphate + NADP(+) + H2O = (2R)-3-phosphoglycerate + NADPH + 2 H(+). Insensitive to magnesium or calcium when dephosphorylated. When phosphorylated, 3-fold activation by magnesium or calcium, 2-fold activation by potassium, inhibited by ADP and AMP and insensitive to ATP or PPi. In terms of biological role, important as a means of generating NADPH for biosynthetic reactions. In Triticum aestivum (Wheat), this protein is NADP-dependent glyceraldehyde-3-phosphate dehydrogenase (GAPN).